Reading from the N-terminus, the 176-residue chain is Interleukin-19 (176 aa).

The N-terminal stretch at 1–24 (MKTQCASTWLLGMTLILCSVHIYS) is a signal peptide. 3 cysteine pairs are disulfide-bonded: cysteine 28–cysteine 120, cysteine 74–cysteine 126, and cysteine 75–cysteine 128. N-linked (GlcNAc...) asparagine glycosylation occurs at asparagine 56. N-linked (GlcNAc...) asparagine glycans are attached at residues asparagine 127 and asparagine 134.

It belongs to the IL-10 family.

The protein localises to the secreted. In terms of biological role, cytokine that functions as an anti-inflammatory and proangiogenic factor. Polarizes adaptive immunity to an anti-inflammatory phenotype through induction of T-helper 2 responses by both down-regulation of IFN-gamma and up-regulation of IL4 and IL5. Produced by osteocytes, stimulates granulopoiesis and neutrophil formation. Exerts its biological effect through a receptor complex consisting of a heterodimer of IL20RA and IL20RB. In turn, activates the Janus kinase (JAK) and signal transducer and activator of transcription (STAT) pathway, and importantly, STAT3. The polypeptide is Interleukin-19 (Il19) (Mus musculus (Mouse)).